A 221-amino-acid polypeptide reads, in one-letter code: Ribosomal RNA small subunit methyltransferase Nep1 (221 aa).

Residues G174, G179, and 196-201 (LGEVAM) each bind S-adenosyl-L-methionine.

Belongs to the class IV-like SAM-binding methyltransferase superfamily. RNA methyltransferase NEP1 family. As to quaternary structure, homodimer.

The enzyme catalyses a pseudouridine in rRNA + S-adenosyl-L-methionine = an N(1)-methylpseudouridine in rRNA + S-adenosyl-L-homocysteine + H(+). Methyltransferase involved in ribosomal biogenesis. Specifically catalyzes the N1-methylation of the pseudouridine corresponding to position 914 in M.jannaschii 16S rRNA. The sequence is that of Ribosomal RNA small subunit methyltransferase Nep1 from Pyrobaculum arsenaticum (strain DSM 13514 / JCM 11321 / PZ6).